Consider the following 269-residue polypeptide: Thiazole synthase (269 aa).

The Schiff-base intermediate with DXP role is filled by Lys109. Residues Gly170, 196-197 (AG), and 218-219 (NT) contribute to the 1-deoxy-D-xylulose 5-phosphate site.

The protein belongs to the ThiG family. As to quaternary structure, homotetramer. Forms heterodimers with either ThiH or ThiS.

It localises to the plastid. The protein localises to the chloroplast. The enzyme catalyses [ThiS sulfur-carrier protein]-C-terminal-Gly-aminoethanethioate + 2-iminoacetate + 1-deoxy-D-xylulose 5-phosphate = [ThiS sulfur-carrier protein]-C-terminal Gly-Gly + 2-[(2R,5Z)-2-carboxy-4-methylthiazol-5(2H)-ylidene]ethyl phosphate + 2 H2O + H(+). The protein operates within cofactor biosynthesis; thiamine diphosphate biosynthesis. Functionally, catalyzes the rearrangement of 1-deoxy-D-xylulose 5-phosphate (DXP) to produce the thiazole phosphate moiety of thiamine. Sulfur is provided by the thiocarboxylate moiety of the carrier protein ThiS. In vitro, sulfur can be provided by H(2)S. In Thalassiosira pseudonana (Marine diatom), this protein is Thiazole synthase.